The chain runs to 389 residues: S-adenosylmethionine synthase (389 aa).

Histidine 17 serves as a coordination point for ATP. Position 19 (aspartate 19) interacts with Mg(2+). Glutamate 45 contributes to the K(+) binding site. Positions 58 and 101 each coordinate L-methionine. The segment at 101-111 (QSPDISQGVTE) is flexible loop. ATP contacts are provided by residues 168-170 (DSK), 234-235 (RF), aspartate 243, 249-250 (RK), alanine 266, and lysine 270. Aspartate 243 serves as a coordination point for L-methionine. Position 274 (lysine 274) interacts with L-methionine.

It belongs to the AdoMet synthase family. As to quaternary structure, homotetramer; dimer of dimers. Mg(2+) serves as cofactor. Requires K(+) as cofactor.

It localises to the cytoplasm. It catalyses the reaction L-methionine + ATP + H2O = S-adenosyl-L-methionine + phosphate + diphosphate. It participates in amino-acid biosynthesis; S-adenosyl-L-methionine biosynthesis; S-adenosyl-L-methionine from L-methionine: step 1/1. In terms of biological role, catalyzes the formation of S-adenosylmethionine (AdoMet) from methionine and ATP. The overall synthetic reaction is composed of two sequential steps, AdoMet formation and the subsequent tripolyphosphate hydrolysis which occurs prior to release of AdoMet from the enzyme. The polypeptide is S-adenosylmethionine synthase (Geobacter sulfurreducens (strain ATCC 51573 / DSM 12127 / PCA)).